A 635-amino-acid polypeptide reads, in one-letter code: Threonine--tRNA ligase (635 aa).

Residues M1–T61 form the TGS domain. Residues D242–P533 are catalytic. Zn(2+)-binding residues include C333, H384, and H510.

This sequence belongs to the class-II aminoacyl-tRNA synthetase family. Homodimer. The cofactor is Zn(2+).

It localises to the cytoplasm. It catalyses the reaction tRNA(Thr) + L-threonine + ATP = L-threonyl-tRNA(Thr) + AMP + diphosphate + H(+). Functionally, catalyzes the attachment of threonine to tRNA(Thr) in a two-step reaction: L-threonine is first activated by ATP to form Thr-AMP and then transferred to the acceptor end of tRNA(Thr). Also edits incorrectly charged L-seryl-tRNA(Thr). The protein is Threonine--tRNA ligase of Cupriavidus necator (strain ATCC 17699 / DSM 428 / KCTC 22496 / NCIMB 10442 / H16 / Stanier 337) (Ralstonia eutropha).